The sequence spans 467 residues: Uronate isomerase (467 aa).

Belongs to the metallo-dependent hydrolases superfamily. Uronate isomerase family.

The catalysed reaction is D-glucuronate = D-fructuronate. It carries out the reaction aldehydo-D-galacturonate = keto-D-tagaturonate. It functions in the pathway carbohydrate metabolism; pentose and glucuronate interconversion. The protein is Uronate isomerase of Staphylococcus haemolyticus (strain JCSC1435).